We begin with the raw amino-acid sequence, 462 residues long: Phosphoglucosamine mutase (462 aa).

The Phosphoserine intermediate role is filled by Ser112. Mg(2+)-binding residues include Ser112, Asp250, Asp252, and Asp254. Ser112 is modified (phosphoserine).

This sequence belongs to the phosphohexose mutase family. The cofactor is Mg(2+). Post-translationally, activated by phosphorylation.

The enzyme catalyses alpha-D-glucosamine 1-phosphate = D-glucosamine 6-phosphate. Functionally, catalyzes the conversion of glucosamine-6-phosphate to glucosamine-1-phosphate. This is Phosphoglucosamine mutase from Parasynechococcus marenigrum (strain WH8102).